The chain runs to 390 residues: Coenzyme A biosynthesis bifunctional protein CoaBC (390 aa).

Residues 1 to 188 (MDKNKHILIG…NQKDYLKNKK (188 aa)) are phosphopantothenoylcysteine decarboxylase. Residue cysteine 156 is the Proton donor of the active site. Residues 189–390 (ILITASRTEE…VAKEILKILY (202 aa)) form a phosphopantothenate--cysteine ligase region. Residues aspartate 277, lysine 287, 304-307 (PDII), phenylalanine 323, lysine 338, and lysine 342 each bind CTP.

It in the N-terminal section; belongs to the HFCD (homo-oligomeric flavin containing Cys decarboxylase) superfamily. In the C-terminal section; belongs to the PPC synthetase family. The cofactor is Mg(2+). Requires FMN as cofactor.

The enzyme catalyses N-[(R)-4-phosphopantothenoyl]-L-cysteine + H(+) = (R)-4'-phosphopantetheine + CO2. It carries out the reaction (R)-4'-phosphopantothenate + L-cysteine + CTP = N-[(R)-4-phosphopantothenoyl]-L-cysteine + CMP + diphosphate + H(+). Its pathway is cofactor biosynthesis; coenzyme A biosynthesis; CoA from (R)-pantothenate: step 2/5. It functions in the pathway cofactor biosynthesis; coenzyme A biosynthesis; CoA from (R)-pantothenate: step 3/5. In terms of biological role, catalyzes two sequential steps in the biosynthesis of coenzyme A. In the first step cysteine is conjugated to 4'-phosphopantothenate to form 4-phosphopantothenoylcysteine. In the second step the latter compound is decarboxylated to form 4'-phosphopantotheine. The protein is Coenzyme A biosynthesis bifunctional protein CoaBC of Borreliella burgdorferi (strain ATCC 35210 / DSM 4680 / CIP 102532 / B31) (Borrelia burgdorferi).